A 635-amino-acid chain; its full sequence is UvrABC system protein C (635 aa).

Positions 1–14 (MAQNHMSETMNDIS) are enriched in polar residues. The segment at 1–27 (MAQNHMSETMNDISAESPDQPEPPRTG) is disordered. Positions 40–117 (SSPGVYRMLD…IKQLKPKYNV (78 aa)) constitute a GIY-YIG domain. Residues 227 to 262 (TKIQEELGAEMQAASEAMEYERAAALRDRIKALTQV) form the UVR domain.

This sequence belongs to the UvrC family. As to quaternary structure, interacts with UvrB in an incision complex.

The protein localises to the cytoplasm. Functionally, the UvrABC repair system catalyzes the recognition and processing of DNA lesions. UvrC both incises the 5' and 3' sides of the lesion. The N-terminal half is responsible for the 3' incision and the C-terminal half is responsible for the 5' incision. The sequence is that of UvrABC system protein C from Ruegeria sp. (strain TM1040) (Silicibacter sp.).